Reading from the N-terminus, the 72-residue chain is Cytochrome c oxidase copper chaperone 2 (72 aa).

Positions 32 and 33 each coordinate Cu cation. Positions 32-72 (CCACPDTKKLRDECIVEHGESACTKWIEAHILCLRSEGFKV) constitute a CHCH domain. Short sequence motifs (cx9C motif) lie at residues 35–45 (CPDTKKLRDEC) and 54–64 (CTKWIEAHILC). Cystine bridges form between Cys35–Cys64 and Cys45–Cys54.

Belongs to the COX17 family.

Its subcellular location is the mitochondrion intermembrane space. Functionally, copper chaperone for cytochrome c oxidase (COX). Binds 2 copper ions and delivers them to the Cu(A) site of COX. In Arabidopsis thaliana (Mouse-ear cress), this protein is Cytochrome c oxidase copper chaperone 2 (COX17-2).